Here is a 390-residue protein sequence, read N- to C-terminus: MAFAASHTASPSSCGGVAQRRSNGMSPVVAMASTINRVKTAKKPYTPPREVHLQVKHSLPPQKREIFDSLQPWAKENLLNLLKPVEKSWQPQDFLPDPSSDGFYDEVKELRERAKEIPDDYFVCLVGDMVTEEALPTYQTMLNTLDGVRDETGASPTTWAVWTRAWTAEENRHGDLLNKYMYLTGRVDMKQIEKTIQYLIGSGMDPGTENNPYLGFLYTSFQERATFISHGNTARHAKEYGDLKLAQICGTIAADEKRHETAYTKIVEKLFEIDPDYTVLAFADMMRKKISMPAHLMYDGKDDNLFEHFSAVAQRLGVYTARDYADILEFLVQRWKVADLTGLSGEGRRAQDFVCTLAPRIRRLDERAQARAKQAPVIPFSWVYDRKVQL.

The tract at residues 1–22 (MAFAASHTASPSSCGGVAQRRS) is disordered. The transit peptide at 1–31 (MAFAASHTASPSSCGGVAQRRSNGMSPVVAM) directs the protein to the chloroplast. Fe cation contacts are provided by glutamate 132, glutamate 170, histidine 173, glutamate 223, glutamate 256, and histidine 259.

The protein belongs to the fatty acid desaturase type 2 family. Homodimer. Fe(2+) is required as a cofactor.

Its subcellular location is the plastid. It is found in the chloroplast. The catalysed reaction is octadecanoyl-[ACP] + 2 reduced [2Fe-2S]-[ferredoxin] + O2 + 2 H(+) = (9Z)-octadecenoyl-[ACP] + 2 oxidized [2Fe-2S]-[ferredoxin] + 2 H2O. Its pathway is lipid metabolism; fatty acid metabolism. Its function is as follows. Converts stearoyl-ACP to oleoyl-ACP by introduction of a cis double bond between carbons 9 and 10 of the acyl chain. The protein is Stearoyl-[acyl-carrier-protein] 9-desaturase 5, chloroplastic of Oryza sativa subsp. japonica (Rice).